The sequence spans 227 residues: N-acetyltransferase 8 (227 aa).

Over 1-42 (MAPCHIRKYQESDRQWVVGLLSRGMAEHAPATFRQLLKLPRT) the chain is Cytoplasmic. A helical; Signal-anchor for type II membrane protein transmembrane segment spans residues 43–63 (LILLLGGPLALLLVSGSWLLA). In terms of domain architecture, N-acetyltransferase spans 61–220 (LLALVFSISL…HTVHFIYHLP (160 aa)). Over 64–227 (LVFSISLFPA…HLPSSKVGSL (164 aa)) the chain is Lumenal.

It belongs to the NAT8 family. Preferentially expressed in liver and kidney. Also detected in brain (at protein level).

The protein localises to the endoplasmic reticulum-Golgi intermediate compartment membrane. Its subcellular location is the endoplasmic reticulum membrane. It catalyses the reaction L-lysyl-[protein] + acetyl-CoA = N(6)-acetyl-L-lysyl-[protein] + CoA + H(+). The enzyme catalyses an S-substituted L-cysteine + acetyl-CoA = an N-acetyl-L-cysteine-S-conjugate + CoA + H(+). It functions in the pathway sulfur metabolism; glutathione metabolism. Its function is as follows. Endoplasmic reticulum (ER)-membrane-bound lysine N-acetyltransferase catalyzing the N6-acetylation of lysine residues in the lumen of the ER in various proteins, including PROM1 and BACE1, using acetyl-CoA as acetyl donor. Thereby, may regulate apoptosis through the acetylation and the regulation of the expression of PROM1. May also regulate amyloid beta-peptide secretion through acetylation of BACE1 and the regulation of its expression in neurons. N(6)-lysine acetylation in the ER maintains protein homeostasis and regulates reticulophagy. Alternatively, acetylates the free alpha-amino group of cysteine S-conjugates to form mercapturic acids. This is the final step in a major route for detoxification of a wide variety of reactive electrophiles which starts with their incorporation into glutathione S-conjugates. The glutathione S-conjugates are then further processed into cysteine S-conjugates and finally mercapturic acids which are water soluble and can be readily excreted in urine or bile. This Homo sapiens (Human) protein is N-acetyltransferase 8.